The chain runs to 304 residues: MSGIPDPQRVGRVAVLMGGTSAERDISLRSGGAILAALQRCGYDAEAYDPRDRALEGLRGYDVVFIALHGRGGEDGTVQGLLDLLGIPYTGSGVLGSALGMDKWRCKRLWQGSGLPTPAGQLLTGDRPVLDEGVGYPVIVKPAREGSSLGMSRVEGPEELAEAYRVAAAYDDTVLAEAWVEGEEYTVALLGDQALPSIRLETPHAFFDYAAKYQAEDTGHHCPSGLGPEEEAELGALCREAFIASGGNGWGRVDVMRDTGGRWWLLEVNTIPGMTDHSLVPIAAAQAGIGFDELVARILGEALR.

The ATP-grasp domain maps to 107–300 (KRLWQGSGLP…FDELVARILG (194 aa)). 134–186 (VGYPVIVKPAREGSSLGMSRVEGPEELAEAYRVAAAYDDTVLAEAWVEGEEYT) contributes to the ATP binding site. Mg(2+) is bound by residues aspartate 254, glutamate 267, and asparagine 269.

This sequence belongs to the D-alanine--D-alanine ligase family. Mg(2+) serves as cofactor. Mn(2+) is required as a cofactor.

It localises to the cytoplasm. It catalyses the reaction 2 D-alanine + ATP = D-alanyl-D-alanine + ADP + phosphate + H(+). The protein operates within cell wall biogenesis; peptidoglycan biosynthesis. In terms of biological role, cell wall formation. The sequence is that of D-alanine--D-alanine ligase from Halorhodospira halophila (strain DSM 244 / SL1) (Ectothiorhodospira halophila (strain DSM 244 / SL1)).